The following is a 74-amino-acid chain: SPbeta prophage-derived uncharacterized HTH-type transcriptional regulator YopS (74 aa).

The HTH cro/C1-type domain occupies isoleucine 11 to leucine 66. A DNA-binding region (H-T-H motif) is located at residues isoleucine 22–arginine 41.

This is SPbeta prophage-derived uncharacterized HTH-type transcriptional regulator YopS (yopS) from Bacillus subtilis (strain 168).